Consider the following 311-residue polypeptide: 4-diphosphocytidyl-2-C-methyl-D-erythritol kinase (311 aa).

K11 is a catalytic residue. 94–104 provides a ligand contact to ATP; sequence PVAAGLAGGSA. D136 is a catalytic residue.

It belongs to the GHMP kinase family. IspE subfamily.

It carries out the reaction 4-CDP-2-C-methyl-D-erythritol + ATP = 4-CDP-2-C-methyl-D-erythritol 2-phosphate + ADP + H(+). The protein operates within isoprenoid biosynthesis; isopentenyl diphosphate biosynthesis via DXP pathway; isopentenyl diphosphate from 1-deoxy-D-xylulose 5-phosphate: step 3/6. Its function is as follows. Catalyzes the phosphorylation of the position 2 hydroxy group of 4-diphosphocytidyl-2C-methyl-D-erythritol. This chain is 4-diphosphocytidyl-2-C-methyl-D-erythritol kinase, found in Synechococcus sp. (strain JA-2-3B'a(2-13)) (Cyanobacteria bacterium Yellowstone B-Prime).